The following is a 1201-amino-acid chain: Period circadian protein homolog 3 (1201 aa).

Residues 1-50 (MPRGEAPGPGRRGAKDEALGEESGERWSPEFHLQRKLADSSHSEQQDRNR) form a disordered region. Over residues 13 to 50 (GAKDEALGEESGERWSPEFHLQRKLADSSHSEQQDRNR) the composition is skewed to basic and acidic residues. The Nuclear export signal 1 signature appears at 55-64 (LIMVVQEMKK). PAS domains follow at residues 121-188 (IASE…RAQL) and 262-328 (YEAP…KVLK). Residues 337–380 (HSPIRFCTQNGDYIILDSSWSSFVNPWSRKISFIIGRHKVRTSP) enclose the PAC domain. Positions 403 to 412 (LQEQIYKLLL) match the Nuclear export signal 3 motif. The CSNK1E binding domain stretch occupies residues 555–760 (LKRKCISCTN…SSSNTGSGPR (206 aa)). Disordered stretches follow at residues 717–788 (YSYF…FPPA) and 881–923 (PSMS…RSSS). Residues 721-731 (QGDSTSKQTRS) show a composition bias toward polar residues. Residues 729 to 745 (TRSAGCRKGKHKRKKLP) carry the Nuclear localization signal motif. Residues 733 to 743 (GCRKGKHKRKK) show a composition bias toward basic residues. Low complexity-rich tracts occupy residues 767-783 (AQPCCPSAASSPHTSSP) and 881-890 (PSMSSAMSPT). The segment covering 900–911 (QRREEEKWEAQS) has biased composition (basic and acidic residues). Serine 919 carries the phosphoserine modification. A Nuclear export signal 2 motif is present at residues 925–932 (LQLNLLQE). The tract at residues 952 to 1067 (TEYCVTGNNG…GSAASGSSDS (116 aa)) is disordered. Polar residues-rich tracts occupy residues 957 to 976 (TGNNGSESSPATTGALSTGS), 983 to 994 (SHPTASALSTGS), 1001 to 1012 (SHPTASALSTGS), and 1035 to 1050 (TPSHPTATVLSTGSPP). 5 tandem repeats follow at residues 965 to 982 (SPATTGALSTGSPPRENP), 983 to 1000 (SHPTASALSTGSPPMKNP), 1001 to 1018 (SHPTASALSTGSPPMKNP), 1019 to 1036 (SHPTASTLSMGLPPSRTP), and 1037 to 1054 (SHPTATVLSTGSPPSESP). Positions 965 to 1054 (SPATTGALST…STGSPPSESP (90 aa)) are 5 X 18 AA tandem repeats of S-[HP]-[AP]-T-[AT]-[GST]-[ATV]-L-S-[MT]-G-[LS]-P-P-[MRS]-[EKR]-[NST]-P. Position 994 is a phosphoserine (serine 994). Phosphoserine is present on serine 1053. Residues 1053–1067 (SPSRTGSAASGSSDS) are compositionally biased toward low complexity. Residues 1123–1201 (ERVKEVVLKE…CGQVLVEDSC (79 aa)) are CRY binding domain.

Homodimer. Component of the circadian core oscillator, which includes the CRY proteins, CLOCK or NPAS2, BMAL1 or BMAL2, CSNK1D and/or CSNK1E, TIMELESS and the PER proteins. Interacts directly with PER1, PER2, CRY1, CRY2, and TIMELESS; interaction with CRY1 and CRY2 is weak and not rhythmic. Interacts with FBXW11 and BTRC. In terms of processing, phosphorylation by CSNK1E is weak and appears to require association with PER1 and translocation to the nucleus. Post-translationally, ubiquitinated.

The protein resides in the cytoplasm. Its subcellular location is the nucleus. Originally described as a core component of the circadian clock. The circadian clock, an internal time-keeping system, regulates various physiological processes through the generation of approximately 24 hour circadian rhythms in gene expression, which are translated into rhythms in metabolism and behavior. It is derived from the Latin roots 'circa' (about) and 'diem' (day) and acts as an important regulator of a wide array of physiological functions including metabolism, sleep, body temperature, blood pressure, endocrine, immune, cardiovascular, and renal function. Consists of two major components: the central clock, residing in the suprachiasmatic nucleus (SCN) of the brain, and the peripheral clocks that are present in nearly every tissue and organ system. Both the central and peripheral clocks can be reset by environmental cues, also known as Zeitgebers (German for 'timegivers'). The predominant Zeitgeber for the central clock is light, which is sensed by retina and signals directly to the SCN. The central clock entrains the peripheral clocks through neuronal and hormonal signals, body temperature and feeding-related cues, aligning all clocks with the external light/dark cycle. Circadian rhythms allow an organism to achieve temporal homeostasis with its environment at the molecular level by regulating gene expression to create a peak of protein expression once every 24 hours to control when a particular physiological process is most active with respect to the solar day. Transcription and translation of core clock components (CLOCK, NPAS2, BMAL1, BMAL2, PER1, PER2, PER3, CRY1 and CRY2) plays a critical role in rhythm generation, whereas delays imposed by post-translational modifications (PTMs) are important for determining the period (tau) of the rhythms (tau refers to the period of a rhythm and is the length, in time, of one complete cycle). A diurnal rhythm is synchronized with the day/night cycle, while the ultradian and infradian rhythms have a period shorter and longer than 24 hours, respectively. Disruptions in the circadian rhythms contribute to the pathology of cardiovascular diseases, cancer, metabolic syndromes and aging. A transcription/translation feedback loop (TTFL) forms the core of the molecular circadian clock mechanism. Transcription factors, CLOCK or NPAS2 and BMAL1 or BMAL2, form the positive limb of the feedback loop, act in the form of a heterodimer and activate the transcription of core clock genes and clock-controlled genes (involved in key metabolic processes), harboring E-box elements (5'-CACGTG-3') within their promoters. The core clock genes: PER1/2/3 and CRY1/2 which are transcriptional repressors form the negative limb of the feedback loop and interact with the CLOCK|NPAS2-BMAL1|BMAL2 heterodimer inhibiting its activity and thereby negatively regulating their own expression. This heterodimer also activates nuclear receptors NR1D1, NR1D2, RORA, RORB and RORG, which form a second feedback loop and which activate and repress BMAL1 transcription, respectively. Has a redundant role with the other PER proteins PER1 and PER2 and is not essential for the circadian rhythms maintenance. In contrast, plays an important role in sleep-wake timing and sleep homeostasis probably through the transcriptional regulation of sleep homeostasis-related genes, without influencing circadian parameters. Can bind heme. This Homo sapiens (Human) protein is Period circadian protein homolog 3 (PER3).